Here is a 370-residue protein sequence, read N- to C-terminus: Cyclin-A3-4 (370 aa).

Belongs to the cyclin family. Cyclin AB subfamily. As to quaternary structure, interacts with FZR2/CCS52A1, FZR1/CCS52A2 and FZR3/CCS52B.

The chain is Cyclin-A3-4 (CYCA3-4) from Arabidopsis thaliana (Mouse-ear cress).